The sequence spans 434 residues: F-box/LRR-repeat protein 21 (434 aa).

An F-box domain is found at 39-85; the sequence is LLDWGTLPHHVILQIFQYLPLIDRARASSVCRRWNEVFHIPDLWRKF. LRR repeat units follow at residues 187–213, 214–239, 242–265, 322–347, 349–374, and 375–400; these read DTPV…KMSS, CPHV…ALNY, LSDE…RIDV, GRSV…VVCA, GLLP…GLSE, and CEVS…SIME.

In terms of assembly, part of the SCF (SKP1-CUL1-F-box) E3 ubiquitin-protein ligase complex SCF(FBXL21) composed of CUL1, SKP1, RBX1 and FBXL21. Interacts with CRY1 and CRY2. As to expression, expressed in the hypothalamus, especially in the suprachiasmatic nucleus (SCN). Expression is driven by the core-clock. There is a pronounced diurnal and circadian expression rhythms rising rapidly at the start of the day and declining at the onset of the night.

Its subcellular location is the cytoplasm. The protein resides in the cytosol. It localises to the nucleus. It participates in protein modification; protein ubiquitination. In terms of biological role, substrate-recognition component of the SCF(FBXL21) E3 ubiquitin ligase complex involved in circadian rhythm function. Plays a key role in the maintenance of both the speed and the robustness of the circadian clock oscillation. The SCF(FBXL21) complex mainly acts in the cytosol and mediates ubiquitination of CRY proteins (CRY1 and CRY2), leading to CRY proteins stabilization. The SCF(FBXL21) complex counteracts the activity of the SCF(FBXL3) complex and protects CRY proteins from degradation. Involved in the hypothalamic suprachiasmatic nucleus (SCN) clock regulating temporal organization of the daily activities. This chain is F-box/LRR-repeat protein 21 (Fbxl21), found in Mus musculus (Mouse).